An 835-amino-acid polypeptide reads, in one-letter code: MGGRVFLAFCVWLTLPGAETQDSRGCARWCPQNSSCVNATACRCNPGFSSFSEIITTPTETCDDINECATPSKVSCGKFSDCWNTEGSYDCVCSPGYEPVSGAKTFKNESENTCQDVDECQQNPRLCKSYGTCVNTLGSYTCQCLPGFKFIPEDPKVCTDVNECTSGQNPCHSSTHCLNNVGSYQCRCRPGWQPIPGSPNGPNNTVCEDVDECSSGQHQCDSSTVCFNTVGSYSCRCRPGWKPRHGIPNNQKDTVCEDMTFSTWTPPPGVHSQTLSRFFDKVQDLGRDSKTSSAEVTIQNVIKLVDELMEAPGDVEALAPPVRHLIATQLLSNLEDIMRILAKSLPKGPFTYISPSNTELTLMIQERGDKNVTMGQSSARMKLNWAVAAGAEDPGPAVAGILSIQNMTTLLANASLNLHSKKQAELEEIYESSIRGVQLRRLSAVNSIFLSHNNTKELNSPILFAFSHLESSDGEAGRDPPAKDVMPGPRQELLCAFWKSDSDRGGHWATEGCQVLGSKNGSTTCQCSHLSSFAILMAHYDVEDWKLTLITRVGLALSLFCLLLCILTFLLVRPIQGSRTTIHLHLCICLFVGSTIFLAGIENEGGQVGLRCRLVAGLLHYCFLAAFCWMSLEGLELYFLVVRVFQGQGLSTRWLCLIGYGVPLLIVGVSAAIYSKGYGRPRYCWLDFEQGFLWSFLGPVTFIILCNAVIFVTTVWKLTQKFSEINPDMKKLKKARALTITAIAQLFLLGCTWVFGLFIFDDRSLVLTYVFTILNCLQGAFLYLLHCLLNKKVREEYRKWACLVAGGSKYSEFTSTTSGTGHNQTRALRASESGI.

The first 20 residues, 1–20, serve as a signal peptide directing secretion; the sequence is MGGRVFLAFCVWLTLPGAET. Over 21-552 the chain is Extracellular; sequence QDSRGCARWC…EDWKLTLITR (532 aa). An EGF-like 1 domain is found at 22-63; it reads DSRGCARWCPQNSSCVNATACRCNPGFSSFSEIITTPTETCD. 15 cysteine pairs are disulfide-bonded: C26/C36, C30/C42, C44/C62, C68/C82, C76/C91, C93/C114, C120/C133, C127/C142, C144/C158, C164/C177, C171/C186, C188/C207, C213/C226, C220/C235, and C237/C256. N-linked (GlcNAc...) asparagine glycans are attached at residues N33 and N38. One can recognise an EGF-like 2; calcium-binding domain in the interval 64–115; it reads DINECATPSKVSCGKFSDCWNTEGSYDCVCSPGYEPVSGAKTFKNESENTCQ. N108 is a glycosylation site (N-linked (GlcNAc...) asparagine). Residues 116–159 form the EGF-like 3; calcium-binding domain; that stretch reads DVDECQQNPRLCKSYGTCVNTLGSYTCQCLPGFKFIPEDPKVCT. One can recognise an EGF-like 4; calcium-binding domain in the interval 160–208; sequence DVNECTSGQNPCHSSTHCLNNVGSYQCRCRPGWQPIPGSPNGPNNTVCE. A glycan (N-linked (GlcNAc...) asparagine) is linked at N203. The EGF-like 5; calcium-binding domain occupies 209–257; the sequence is DVDECSSGQHQCDSSTVCFNTVGSYSCRCRPGWKPRHGIPNNQKDTVCE. The region spanning 349–543 is the GAIN-B domain; it reads PFTYISPSNT…AILMAHYDVE (195 aa). Residues N371, N406, N413, N453, and N520 are each glycosylated (N-linked (GlcNAc...) asparagine). 2 cysteine pairs are disulfide-bonded: C495-C525 and C513-C527. Positions 495–543 are GPS; the sequence is CAFWKSDSDRGGHWATEGCQVLGSKNGSTTCQCSHLSSFAILMAHYDVE. A helical membrane pass occupies residues 553–572; it reads VGLALSLFCLLLCILTFLLV. Topologically, residues 573–581 are cytoplasmic; sequence RPIQGSRTT. A helical membrane pass occupies residues 582–601; that stretch reads IHLHLCICLFVGSTIFLAGI. Over 602 to 620 the chain is Extracellular; the sequence is ENEGGQVGLRCRLVAGLLH. The chain crosses the membrane as a helical span at residues 621–642; sequence YCFLAAFCWMSLEGLELYFLVV. Topologically, residues 643-653 are cytoplasmic; the sequence is RVFQGQGLSTR. The chain crosses the membrane as a helical span at residues 654-674; the sequence is WLCLIGYGVPLLIVGVSAAIY. The Extracellular segment spans residues 675 to 691; it reads SKGYGRPRYCWLDFEQG. The chain crosses the membrane as a helical span at residues 692 to 712; the sequence is FLWSFLGPVTFIILCNAVIFV. At 713–739 the chain is on the cytoplasmic side; that stretch reads TTVWKLTQKFSEINPDMKKLKKARALT. Residues 740–760 form a helical membrane-spanning segment; sequence ITAIAQLFLLGCTWVFGLFIF. The Extracellular segment spans residues 761–766; it reads DDRSLV. Residues 767 to 789 form a helical membrane-spanning segment; it reads LTYVFTILNCLQGAFLYLLHCLL. At 790–835 the chain is on the cytoplasmic side; sequence NKKVREEYRKWACLVAGGSKYSEFTSTTSGTGHNQTRALRASESGI. A compositionally biased stretch (polar residues) spans 814–826; the sequence is TSTTSGTGHNQTR. Residues 814–835 form a disordered region; sequence TSTTSGTGHNQTRALRASESGI. Phosphoserine is present on S815. The residue at position 816 (T816) is a Phosphothreonine. Phosphoserine is present on S818. Residue T825 is modified to Phosphothreonine. 2 positions are modified to phosphoserine: S831 and S833.

The protein belongs to the G-protein coupled receptor 2 family. LN-TM7 subfamily. As to quaternary structure, forms a heterodimer, consisting of a large extracellular region (alpha subunit) non-covalently linked to a seven-transmembrane moiety (beta subunit). Interacts with complement decay-accelerating factor (DAF). The largest isoform (isoform 1) interacts with chondroitin sulfate. Post-translationally, proteolytically cleaved into 2 subunits, an extracellular alpha subunit and a seven-transmembrane subunit. As to expression, broadly expressed, found on most hematopoietic cells, including activated lymphocytes, monocytes, macrophages, dendritic cells, and granulocytes. Expressed also abundantly by smooth muscle cells. Expressed in thyroid, colorectal, gastric, esophageal and pancreatic carcinomas too. Expression are increased under inflammatory conditions in the CNS of multiple sclerosis and in synovial tissue of patients with rheumatoid arthritis. Increased expression of CD97 in the synovium is accompanied by detectable levels of soluble CD97 in the synovial fluid.

It localises to the cell membrane. The protein resides in the secreted. The protein localises to the extracellular space. In terms of biological role, receptor potentially involved in both adhesion and signaling processes early after leukocyte activation. Plays an essential role in leukocyte migration. The protein is Adhesion G protein-coupled receptor E5 of Homo sapiens (Human).